Reading from the N-terminus, the 259-residue chain is Deoxyribose-phosphate aldolase (259 aa).

Aspartate 102 serves as the catalytic Proton donor/acceptor. Residue lysine 167 is the Schiff-base intermediate with acetaldehyde of the active site. The Proton donor/acceptor role is filled by lysine 201.

It belongs to the DeoC/FbaB aldolase family. DeoC type 2 subfamily.

The protein resides in the cytoplasm. It carries out the reaction 2-deoxy-D-ribose 5-phosphate = D-glyceraldehyde 3-phosphate + acetaldehyde. The protein operates within carbohydrate degradation; 2-deoxy-D-ribose 1-phosphate degradation; D-glyceraldehyde 3-phosphate and acetaldehyde from 2-deoxy-alpha-D-ribose 1-phosphate: step 2/2. In terms of biological role, catalyzes a reversible aldol reaction between acetaldehyde and D-glyceraldehyde 3-phosphate to generate 2-deoxy-D-ribose 5-phosphate. In Photorhabdus laumondii subsp. laumondii (strain DSM 15139 / CIP 105565 / TT01) (Photorhabdus luminescens subsp. laumondii), this protein is Deoxyribose-phosphate aldolase.